A 245-amino-acid chain; its full sequence is MDKISIRCFIFLVLTSFVTTVSCLSAATDYREVEDEHEFSYEWNQENGPAKWGKLRPEWKMCGKGEMQSPIDLMNKRVRLVTHLKKLTRHYKPCNATLKNRGHDMMLKFGEEGSGSITVNGTEYKLLQLHWHSPSEHTMNGRRFALELHMVHENINGSLAVVTVLYKIGRPDSFLGLLENKLSAITDQNEAEKYVDVIDPRDIKIGSRKFYRYIGSLTTPPCTQNVIWTVVKKVNTHRYFLLFFT.

Residues 1–23 (MDKISIRCFIFLVLTSFVTTVSC) form the signal peptide. In terms of domain architecture, Alpha-carbonic anhydrase spans 37–245 (HEFSYEWNQE…THRYFLLFFT (209 aa)). A disulfide bond links C62 and C222. N95 is a glycosylation site (N-linked (GlcNAc...) asparagine). The active-site Proton acceptor is H103. N-linked (GlcNAc...) asparagine glycosylation is present at N120. 3 residues coordinate Zn(2+): H130, H132, and H149. A glycan (N-linked (GlcNAc...) asparagine) is linked at N156. Substrate is bound at residue 218–219 (TT).

It belongs to the alpha-class carbonic anhydrase family. The cofactor is Zn(2+). Post-translationally, N-glycosylated. Expressed in stems and roots.

The protein resides in the plastid. It is found in the chloroplast stroma. The catalysed reaction is hydrogencarbonate + H(+) = CO2 + H2O. Functionally, reversible hydration of carbon dioxide. This Arabidopsis thaliana (Mouse-ear cress) protein is Alpha carbonic anhydrase 2 (ACA2).